The sequence spans 438 residues: Envelope glycoprotein M (438 aa).

Topologically, residues 1-13 (MAGSAQPAAVHWR) are intravirion. A helical transmembrane segment spans residues 14 to 34 (LWLAQVGVFAGLALLLLITLI). Topologically, residues 35 to 88 (GAASPGAGLPCFYAAIVNYNARNLSADGGAWAQRELGARHPALFLETPTTAAFS) are virion surface. The helical transmembrane segment at 89–109 (AYTAVVLLAVAAFDVAAAIII) threads the bilayer. Over 110–132 (RRENSGGFAAAYHMNALATLATP) the chain is Intravirion. The helical transmembrane segment at 133 to 153 (PGALLLGALAAWTLQAAVLLL) threads the bilayer. At 154 to 158 (SHKIM) the chain is on the virion surface side. A helical transmembrane segment spans residues 159 to 179 (VLAAATYLAHLAPPAAFVGLF). The Intravirion segment spans residues 180 to 212 (CTAGLPGAEYAQAVHALRERSPRAHRLLGPGRA). The chain crosses the membrane as a helical span at residues 213 to 233 (VMINLAGGLLALIIGTAPLML). Topologically, residues 234–248 (GQLLGAGLGLSLAQT) are virion surface. The helical transmembrane segment at 249-269 (VVAGVTVFCLAAVLFLVLTEL) threads the bilayer. At 270 to 276 (VLSRYTQ) the chain is on the intravirion side. A helical membrane pass occupies residues 277-297 (VLPGPAFGTLVAASCIAVASH). Over 298 to 317 (DYFHQLRGVVRTQAPRAAAR) the chain is Virion surface. A helical membrane pass occupies residues 318–338 (VKLALAGVALLAVAMLVLRLV). Residues 339-438 (RACLHHRRKG…PRSPPPAHVK (100 aa)) lie on the Intravirion side of the membrane. The tract at residues 395–438 (EEAVYEAHAPPRPPTIPLRRPEVPHSRASHPRPPPRSPPPAHVK) is disordered. Residues 425–438 (PRPPPRSPPPAHVK) are compositionally biased toward pro residues.

It belongs to the herpesviridae glycoprotein M family. In terms of assembly, interacts (via N-terminus) with gN (via N-terminus). The gM-gN heterodimer forms the gCII complex. N-glycosylated. It is not O-glycosylated.

It localises to the virion membrane. It is found in the host Golgi apparatus. The protein localises to the host trans-Golgi network. Its subcellular location is the host endosome membrane. The protein resides in the host nucleus inner membrane. Its function is as follows. Envelope glycoprotein important for virion assembly and egress. Plays a role in the correct incorporation of gH-gL into virion membrane. Directs the glycoprotein N (gN) to the host trans-Golgi network. The chain is Envelope glycoprotein M from Bovine herpesvirus 1.1 (strain Cooper) (BoHV-1).